Here is a 66-residue protein sequence, read N- to C-terminus: Large ribosomal subunit protein bL35 (66 aa).

Belongs to the bacterial ribosomal protein bL35 family.

This Phenylobacterium zucineum (strain HLK1) protein is Large ribosomal subunit protein bL35.